Reading from the N-terminus, the 860-residue chain is DNA mismatch repair protein MutS (860 aa).

Position 607 to 614 (607 to 614 (GPNMSGKS)) interacts with ATP.

Belongs to the DNA mismatch repair MutS family.

In terms of biological role, this protein is involved in the repair of mismatches in DNA. It is possible that it carries out the mismatch recognition step. This protein has a weak ATPase activity. The chain is DNA mismatch repair protein MutS from Listeria innocua serovar 6a (strain ATCC BAA-680 / CLIP 11262).